The following is a 115-amino-acid chain: NADH-ubiquinone oxidoreductase chain 3 (115 aa).

3 helical membrane-spanning segments follow: residues 3 to 23, 55 to 75, and 86 to 106; these read LALA…ITFW, FFLV…LLPL, and LTIA…AYEW.

Belongs to the complex I subunit 3 family. In terms of assembly, core subunit of respiratory chain NADH dehydrogenase (Complex I) which is composed of 45 different subunits. Interacts with TMEM186. Interacts with TMEM242.

It is found in the mitochondrion inner membrane. The catalysed reaction is a ubiquinone + NADH + 5 H(+)(in) = a ubiquinol + NAD(+) + 4 H(+)(out). Its function is as follows. Core subunit of the mitochondrial membrane respiratory chain NADH dehydrogenase (Complex I) which catalyzes electron transfer from NADH through the respiratory chain, using ubiquinone as an electron acceptor. Essential for the catalytic activity of complex I. The polypeptide is NADH-ubiquinone oxidoreductase chain 3 (Hylobates lar (Lar gibbon)).